Reading from the N-terminus, the 215-residue chain is Proteasome subunit beta inpE (215 aa).

It belongs to the peptidase T1B family.

The protein resides in the cytoplasm. Its subcellular location is the nucleus. The catalysed reaction is Cleavage of peptide bonds with very broad specificity.. In terms of biological role, proteasome subunit beta type-6; part of the inp gene cluster that mediates the biosynthesis of fellutamide B, a mycotoxin that acts as a proteasome inhibitor. In the first step of fellutabmide B biosynthesis inpC activates 3-hydroxydodecanoic acid to generate 3-hydroxydodecanoyl-AMP that is then loaded onto the T0 domain of inpB. The 3-hydroxydodecanoyl-S-phosphopantetheinyl-T0 is sequentially extended with L-Asn and L-Gln by the two CAT modules of inpB. The linear lipodipeptide from inpB is then transferred onto inpA for the addition of the third amino acid, L-Leu. Reductive releasing of the lipotripeptide by the TE domain of inpA produces (2S)-fellutamide B. InpF might be involved in the release and transfer of the lipodipeptide from inpB to inpA. The inp cluster-encoded proteasome subunit inpE confers resistance to internally produced fellutamides. The MFS efflux transporter inpD may contribute to fellutamide resistance as well. The polypeptide is Proteasome subunit beta inpE (inpE) (Emericella nidulans (strain FGSC A4 / ATCC 38163 / CBS 112.46 / NRRL 194 / M139) (Aspergillus nidulans)).